The sequence spans 149 residues: Oocyte-expressed protein homolog (149 aa).

Residues 1 to 23 (MVDDAGTAESQRGKQTPADSLEQ) form a disordered region. Residues 8–18 (AESQRGKQTPA) show a composition bias toward polar residues. The KH; atypical domain maps to 49–110 (PLVFYLEAWL…SVQNRVKSML (62 aa)).

Belongs to the KHDC1 family. In terms of assembly, component of the subcortical maternal complex (SCMC), at least composed of NLRP5, KHDC3, OOEP, and TLE6. Within the complex, interacts with NLRP5, KHDC3 and TLE6. As part of the SCMC interacts with the SCMC-associated protein NLRP4F. The SCMC may facilitate translocation of its components between the nuclear and cytoplasmic compartments. Forms a scaffold complex with KHDC3/FILIA, and interacts with BLM and TRIM25 at DNA replication forks.

The protein resides in the cytoplasm. Its subcellular location is the nucleus. Component of the subcortical maternal complex (SCMC), a multiprotein complex that plays a key role in early embryonic development. The SCMC complex is a structural constituent of cytoplasmic lattices, which consist in fibrous structures found in the cytoplasm of oocytes and preimplantation embryos. They are required to store maternal proteins critical for embryonic development, such as proteins that control epigenetic reprogramming of the preimplantation embryo, and prevent their degradation or activation. As part of the OOEP-KHDC3 scaffold, recruits BLM and TRIM25 to DNA replication forks, thereby promoting the ubiquitination of BLM by TRIM25, enhancing BLM retainment at replication forks and therefore promoting stalled replication fork restart. Positively regulates the homologous recombination-mediated DNA double-strand break (DSB) repair pathway by regulating ATM activation and RAD51 recruitment to DSBs in oocytes. Thereby contributes to oocyte survival and the resumption and completion of meiosis. This chain is Oocyte-expressed protein homolog (OOEP), found in Papio anubis (Olive baboon).